The sequence spans 394 residues: Elongation factor Tu (394 aa).

One can recognise a tr-type G domain in the interval 10–204; the sequence is KPHVNVGTIG…HLDTYIPEPE (195 aa). The interval 19-26 is G1; the sequence is GHVDHGKT. 19–26 contributes to the GTP binding site; sequence GHVDHGKT. A Mg(2+)-binding site is contributed by Thr-26. Residues 60–64 form a G2 region; sequence GITIN. The segment at 81–84 is G3; it reads DCPG. GTP is bound by residues 81–85 and 136–139; these read DCPGH and NKCD. Residues 136–139 form a G4 region; the sequence is NKCD. Positions 174–176 are G5; the sequence is SAL.

This sequence belongs to the TRAFAC class translation factor GTPase superfamily. Classic translation factor GTPase family. EF-Tu/EF-1A subfamily. Monomer.

It localises to the cytoplasm. The catalysed reaction is GTP + H2O = GDP + phosphate + H(+). GTP hydrolase that promotes the GTP-dependent binding of aminoacyl-tRNA to the A-site of ribosomes during protein biosynthesis. This chain is Elongation factor Tu, found in Aeromonas hydrophila subsp. hydrophila (strain ATCC 7966 / DSM 30187 / BCRC 13018 / CCUG 14551 / JCM 1027 / KCTC 2358 / NCIMB 9240 / NCTC 8049).